The primary structure comprises 268 residues: Eukaryotic translation initiation factor 2 subunit beta (268 aa).

A compositionally biased stretch (basic and acidic residues) spans 1 to 12; it reads MADEINEIREEQ. Positions 1–85 are disordered; the sequence is MADEINEIRE…LNNESVDAGE (85 aa). Residue Ala2 is modified to N-acetylalanine. A phosphoserine; by CK2 mark is found at Ser42, Ser80, and Ser112. The C4-type zinc-finger motif lies at 222-246; that stretch reads CLGCKSPDTILSKENRLFFLRCEKC.

The protein belongs to the eIF-2-beta/eIF-5 family. As to quaternary structure, eukaryotic translation initiation factor 2 eIF2 is a heterotrimeric complex composed of an alpha, a beta and a gamma subunit. In terms of processing, phosphorylated at Ser-42, Ser-80 and Ser-112 by CK2.

It localises to the cytoplasm. It is found in the cytosol. Component of the eIF2 complex that functions in the early steps of protein synthesis by forming a ternary complex with GTP and initiator tRNA. This complex binds to a 40S ribosomal subunit, followed by mRNA binding to form a 43S pre-initiation complex (43S PIC). Junction of the 60S ribosomal subunit to form the 80S initiation complex is preceded by hydrolysis of the GTP bound to eIF2 and release of an eIF2-GDP binary complex. In order for eIF2 to recycle and catalyze another round of initiation, the GDP bound to eIF2 must exchange with GTP by way of a reaction catalyzed by eIF2B. The chain is Eukaryotic translation initiation factor 2 subunit beta from Arabidopsis thaliana (Mouse-ear cress).